The sequence spans 237 residues: MIIYPAIDIQGGQCVRLTQGKKEERKMYFDSPQAVAQRWQAEGAEFIHVVDLDGAFGKGEENMEAIEAIVKAVEIPIQVGGGIRSIEKIQQLLDLGVTRVILGTKALTDEAFLREAIEKYGDRIIVSIDAKEGYVATEGWVKTSSRRALDFAKSIEEIGVKRIVYTDIAKDGMLQGPNFDEIQRMKDSVGMEVIASGGISCETDLQGLKEMDVKGVIVGKALYEGKVQLGKLRGMDI.

The Proton acceptor role is filled by Asp-8. Catalysis depends on Asp-129, which acts as the Proton donor.

This sequence belongs to the HisA/HisF family.

The protein localises to the cytoplasm. It carries out the reaction 1-(5-phospho-beta-D-ribosyl)-5-[(5-phospho-beta-D-ribosylamino)methylideneamino]imidazole-4-carboxamide = 5-[(5-phospho-1-deoxy-D-ribulos-1-ylimino)methylamino]-1-(5-phospho-beta-D-ribosyl)imidazole-4-carboxamide. It participates in amino-acid biosynthesis; L-histidine biosynthesis; L-histidine from 5-phospho-alpha-D-ribose 1-diphosphate: step 4/9. The sequence is that of 1-(5-phosphoribosyl)-5-[(5-phosphoribosylamino)methylideneamino] imidazole-4-carboxamide isomerase from Alkaliphilus metalliredigens (strain QYMF).